A 160-amino-acid chain; its full sequence is Histone H2A.Z-specific chaperone CHZ1 (160 aa).

Residues 1 to 29 show a composition bias toward basic and acidic residues; the sequence is MSDEAKEKRELESQKESSHNKSEKSVEPK. Residues 1 to 160 are disordered; sequence MSDEAKEKRE…DEEDDDFKEQ (160 aa). An N-acetylserine modification is found at Ser2. A compositionally biased stretch (polar residues) spans 56 to 65; the sequence is LTKSENNGTV. 2 positions are modified to phosphoserine: Ser68 and Ser70. Residues 84–94 show a composition bias toward acidic residues; that stretch reads EGEEEEDDLAE. The interval 87–108 is important for H2A.Z-H2B binding; it reads EEEDDLAEIDTSNIITSGRRTR. Basic and acidic residues predominate over residues 110–138; sequence KVIDYKKTAEELDKKEPSTDSKDDVGYGE. Acidic residues predominate over residues 139–160; sequence KEEDEEDEEDEEDEEDDDFKEQ.

The protein belongs to the CHZ1 family. Forms a heterotrimer with H2A.Z-H2B, stabilizing the association of the histone dimer. Also, with a lower affinity, forms a heterotrimer with H2A-H2B.

The protein resides in the nucleus. Its function is as follows. Forms a chaperone-bound H2A.Z-H2B complex that acts as a source for SWR1 complex-dependent H2A to H2A.Z histone replacement in chromatin. The sequence is that of Histone H2A.Z-specific chaperone CHZ1 (CHZ1) from Saccharomyces cerevisiae (strain YJM789) (Baker's yeast).